The primary structure comprises 904 residues: DNA mismatch repair protein MutS (904 aa).

An ATP-binding site is contributed by 638 to 645 (GPNMAGKS). The segment at 825–869 (KSKADGTRRPASYHEAQPLLPGMPEPPSTASAEPPQTVTPPEPPV) is disordered.

It belongs to the DNA mismatch repair MutS family.

In terms of biological role, this protein is involved in the repair of mismatches in DNA. It is possible that it carries out the mismatch recognition step. This protein has a weak ATPase activity. This Oleidesulfovibrio alaskensis (strain ATCC BAA-1058 / DSM 17464 / G20) (Desulfovibrio alaskensis) protein is DNA mismatch repair protein MutS.